Here is a 333-residue protein sequence, read N- to C-terminus: Abequosyltransferase RfbV (333 aa).

The protein belongs to the glycosyltransferase 2 family.

It carries out the reaction CDP-alpha-D-abequose + alpha-D-Man-(1-&gt;4)-alpha-L-Rha-(1-&gt;3)-alpha-D-Gal-di-trans,octa-cis-undecaprenyl diphosphate = alpha-D-Abe-(1-&gt;3)-alpha-D-Man-(1-&gt;4)-alpha-L-Rha-(1-&gt;3)-alpha-D-Gal-di-trans,octa-cis-undecaprenyl diphosphate + CDP + H(+). The protein operates within bacterial outer membrane biogenesis; LPS O-antigen biosynthesis. Functionally, catalyzes the transfer of CDP-abequose on D-mannosyl-L-rhamnosyl-D-galactose-1-diphospholipid to yield D-abequosyl-D-mannosyl-rhamnosyl-D-galactose-1-diphospholipid. The chain is Abequosyltransferase RfbV (rfbV) from Salmonella typhimurium (strain LT2 / SGSC1412 / ATCC 700720).